The chain runs to 841 residues: MIECDAPAVALAPTPALHAAIAGACRRIAPLWPLKNFVAVNPFMGFSGQSFHATCATLHRVARLETLMPRAFYREAIRSGTIERADLAAALAAAPADWCLPTEVGELLKLADNDKTVRKHPAVVATVAEVLTELAAGDRHVARTAFMTDEISRWCAAYFDEGQSVWRMPARGLRPYAAWRASVRYDRNPEAMGIARFRELVAELPEDYVAAIATVVDRLGVPARAIEDYLHQALLEIGGWAAYARYLMWDHELAGDRDDTLEQLLAIRVVWGYALFVQRTDAEFREAWRRAMEQAALPPLDDKLGGDPDLCINMVLQEAYEIAFRRRLLHRLGQSPAAQASGARPAVQAAFCIDVRSEVYRRAMESISSAVETIGFAGFFGFPIEFVPIGHITGRAHCPVLLRPQFTVCEAVDGTSEDEDSEILVMRLLRRRVRKAWKSFKLSAVSSFIYVETAGLLFAGKILSDSLAVTRTVHDPNTDGLDDAVIGRLGPRISPRLVGGRATGFDQAQRVAMAEAVLRAMSMTGPFARLVMLTGHGSTSVNNPHAAGLDCGACGGNTGEANARVAAAILNDSDVRAGLRDRGIDIPEDTFFLGCLHDTTTDEIKLYDLERLPASHREDLRVLRELLAKATSLTRLERATLLGVAGRADAEQRVVTRSRDWAQVRPEWGLAGNASFIAAPRARTRGIDLGGRAFLHEYDWRQDKDFATLQLIMTAPMVVASWINLQYYGSTVNNAAFGAGNKVLHNVAGTIGVLEGNAGDLKVGLPWQSVHDGTRFVHEPLRLAVLIEAPLEAIGRVIAQNSGVRELVDNAWLHLYAISGQGRVSHRYRSGLQWQAIDPQS.

Cysteine 352, aspartate 354, histidine 536, and cysteine 551 together coordinate Zn(2+).

This sequence belongs to the inorganic carbon transporter (TC 9.A.2) DabA family. In terms of assembly, forms a complex with DabB. The cofactor is Zn(2+).

It localises to the cell inner membrane. Its function is as follows. Part of an energy-coupled inorganic carbon pump. This is Probable inorganic carbon transporter subunit DabA 1 from Bradyrhizobium sp. (strain ORS 278).